The chain runs to 316 residues: Ribosomal RNA small subunit methyltransferase H (316 aa).

Residues 35-37 (AGH), D55, F84, D105, and Q112 each bind S-adenosyl-L-methionine.

It belongs to the methyltransferase superfamily. RsmH family.

Its subcellular location is the cytoplasm. It carries out the reaction cytidine(1402) in 16S rRNA + S-adenosyl-L-methionine = N(4)-methylcytidine(1402) in 16S rRNA + S-adenosyl-L-homocysteine + H(+). In terms of biological role, specifically methylates the N4 position of cytidine in position 1402 (C1402) of 16S rRNA. This chain is Ribosomal RNA small subunit methyltransferase H, found in Streptococcus gordonii (strain Challis / ATCC 35105 / BCRC 15272 / CH1 / DL1 / V288).